Consider the following 214-residue polypeptide: tRNA (guanine-N(7)-)-methyltransferase (214 aa).

Positions 43, 68, 95, and 117 each coordinate S-adenosyl-L-methionine. D117 is an active-site residue. Substrate-binding positions include K121, D153, and T190 to E193.

The protein belongs to the class I-like SAM-binding methyltransferase superfamily. TrmB family.

It catalyses the reaction guanosine(46) in tRNA + S-adenosyl-L-methionine = N(7)-methylguanosine(46) in tRNA + S-adenosyl-L-homocysteine. It functions in the pathway tRNA modification; N(7)-methylguanine-tRNA biosynthesis. Its function is as follows. Catalyzes the formation of N(7)-methylguanine at position 46 (m7G46) in tRNA. In Staphylococcus aureus (strain MSSA476), this protein is tRNA (guanine-N(7)-)-methyltransferase.